Consider the following 69-residue polypeptide: uncharacterized protein (69 aa).

Residues 1–15 (MLLYIVIIVACIISK) lie on the Cytoplasmic side of the membrane. A helical membrane pass occupies residues 16-36 (LVPNEYWAIHLFFIIMIFMVY). Residues 37–69 (MYEKLDIHQKYQFWNYTMSGLSGHNVQITCKCY) are Extracellular-facing. N-linked (GlcNAc...) asparagine; by host glycosylation is present at Asn51.

This sequence belongs to the asfivirus X69R family.

It is found in the host membrane. This is an uncharacterized protein from Ornithodoros (relapsing fever ticks).